The primary structure comprises 155 residues: Transcriptional repressor NrdR (155 aa).

A zinc finger spans residues 3-34 (CPFCGNVDTQVKDSRPAEDHVAIRRRRFCPAC). The 91-residue stretch at 49–139 (LVVIKSSGKR…VYKNFQAADD (91 aa)) folds into the ATP-cone domain.

The protein belongs to the NrdR family. It depends on Zn(2+) as a cofactor.

In terms of biological role, negatively regulates transcription of bacterial ribonucleotide reductase nrd genes and operons by binding to NrdR-boxes. In Dinoroseobacter shibae (strain DSM 16493 / NCIMB 14021 / DFL 12), this protein is Transcriptional repressor NrdR.